A 568-amino-acid polypeptide reads, in one-letter code: TNF receptor-associated factor 3 (568 aa).

Residues 1–28 (MESSKKMDSPGALQTNPPLKLHTDRSAG) are disordered. Ser-9 carries the phosphoserine modification. Cys-56 participates in a covalent cross-link: Glycyl cysteine thioester (Cys-Gly) (interchain with G-Cter in ubiquitin). An RING-type zinc finger spans residues 68-77 (CGHRFCESCM). Cys-124 is covalently cross-linked (Glycyl cysteine thioester (Cys-Gly) (interchain with G-Cter in ubiquitin)). 2 TRAF-type zinc fingers span residues 135 to 190 (VHLK…IALQ) and 191 to 249 (KHED…QQIK). Lys-168 participates in a covalent cross-link: Glycyl lysine isopeptide (Lys-Gly) (interchain with G-Cter in ubiquitin). Residues 267 to 338 (SNSLEKKVSL…KLKELDKEIR (72 aa)) adopt a coiled-coil conformation. A Glycyl lysine isopeptide (Lys-Gly) (interchain with G-Cter in ubiquitin) cross-link involves residue Lys-329. The segment at 392-415 (LSVHDIRLADMDLRFQVLETASYN) is (Microbial infection) Interaction with glycoprotein N of Andes and New York hantaviruses. In terms of domain architecture, MATH spans 415 to 560 (NGVLIWKIRD…DDTIFIKVIV (146 aa)).

It belongs to the TNF receptor-associated factor family. A subfamily. As to quaternary structure, homotrimer. Heterotrimer with TRAF2 and TRAF5. Interacts with LTBR/TNFRSF3, TNFRSF4, TNFRSF5/CD40, TNFRSF8/CD30, TNFRSF13C TNFRSF17/BCMA, TLR4 and EDAR. Interacts with MAP3K5, MAP3K14, TRAIP/TRIP, TDP2/TTRAP, TANK/ITRAF and TRAF3IP1. Interaction with TNFRSF5/CD40 is modulated by TANK/ITRAF, which competes for the same binding site. Interacts with TICAM1. Interacts with TRAFD1. Interacts with OTUB1, OTUB2 and OTUD5. Interacts with RNF216, OPTN and TBK1. Identified in a complex with TRAF2, MAP3K14 and BIRC3. Interacts with BIRC2 and BIRC3. Upon exposure to bacterial lipopolysaccharide (LPS), recruited to a transient complex containing TLR4, TRAF3, TRAF6, IKBKG, MAP3K7, MYD88, TICAM1, BIRC2, BIRC3 and UBE2N. Interacts (via RING-type zinc finger domain) with SRC. Interacts with CARD14. Interacts (via MATH domain) with PTPN22; the interaction promotes TRAF3 polyubiquitination. Interacts with MAVS. Directly interacts with DDX3X; this interaction stimulates TRAF3 'Lys-63' ubiquitination. Interacts with IRF3. Interacts with IKBKE in the course of Sendai virus infection. Interacts with TRIM35. Interacts with GAPDH; promoting TRAF3 ubiquitination. Interacts with PPP3CA and PPP3CB. Interacts with ATP1B1; promoting TRAF3 ubiquitination. Interacts with RALGDS. Interacts with FBXO11. In terms of assembly, (Microbial infection) Interacts (via N-terminus) with New York hantavirus glycoprotein N (via C-terminus); this interaction inhibits the formation of TRAF3-TBK1 complexes. (Microbial infection) Interacts with Andes hantavirus glycoprotein N (via C-terminus); this interaction inhibits the formation of TRAF3-TBK1 complexes. As to quaternary structure, (Microbial infection) Interacts with Tula hantavirus glycoprotein N (via C-terminus); this interaction inhibits the formation of TRAF3-TBK1 complexes. In terms of assembly, (Microbial infection) Interacts with Epstein-Barr virus protein LMP1. In terms of processing, undergoes 'Lys-48'-linked polyubiquitination, leading to its proteasomal degradation in response to signaling by TNFSF13B, TLR4 or through CD40. 'Lys-48'-linked polyubiquitinated form is deubiquitinated by OTUD7B, preventing TRAF3 proteolysis and over-activation of non-canonical NF-kappa-B. Undergoes 'Lys-63'-linked ubiquitination during early stages of virus infection, and 'Lys-48'-linked ubiquitination during later stages. Undergoes both 'Lys-48'-linked and 'Lys-63'-linked ubiquitination in response to TLR3 and TLR4 signaling. 'Lys-63'-linked ubiquitination can be mediated by TRIM35. Deubiquitinated by OTUB1, OTUB2 and OTUD5. Undergoes 'Lys-63'-linked deubiquitination by MYSM1 to terminate the pattern-recognition receptors/PRRs pathways. Also undergoes 'Lys-29'-linked ubiquitination on Cys-56 and Cys-124 by NEDD4L; leading to increased 'Lys-48'- and 'Lys-63'-linked ubiquitination as well as increased binding to TBK1. TLR4 signals emanating from bacteria containing vesicles trigger 'Lys-33'-linked polyubiquitination that promotes the assembly of the exocyst complex thereby connecting innate immune signaling to the cellular trafficking apparatus. Deubiquitinated by USP25 during viral infection, leading to TRAF3 stabilization and type I interferon production. Ubiquitinated at Lys-329 by the SCF(FBXL2) complex, leading to its degradation by the proteasome. 'Lys-63'-linked ubiquitination by FBXO11 in a NEDD8-dependent manner promotes the amplification of IFN-I signaling. Post-translationally, (Microbial infection) Cleaved by enterovirus D68 protease 2A; leading to inhibition of NF-kappa-B or IFN-beta triggered by TRAF3.

It is found in the cytoplasm. It localises to the endosome. The protein localises to the mitochondrion. The enzyme catalyses S-ubiquitinyl-[E2 ubiquitin-conjugating enzyme]-L-cysteine + [acceptor protein]-L-lysine = [E2 ubiquitin-conjugating enzyme]-L-cysteine + N(6)-ubiquitinyl-[acceptor protein]-L-lysine.. Cytoplasmic E3 ubiquitin ligase that regulates various signaling pathways, such as the NF-kappa-B, mitogen-activated protein kinase (MAPK) and interferon regulatory factor (IRF) pathways, and thus controls a lot of biological processes in both immune and non-immune cell types. In TLR and RLR signaling pathways, acts as an E3 ubiquitin ligase promoting the synthesis of 'Lys-63'-linked polyubiquitin chains on several substrates such as ASC that lead to the activation of the type I interferon response or the inflammasome. Following the activation of certain TLRs such as TLR4, acts as a negative NF-kappa-B regulator, possibly to avoid unregulated inflammatory response, and its degradation via 'Lys-48'-linked polyubiquitination is required for MAPK activation and production of inflammatory cytokines. Alternatively, when TLR4 orchestrates bacterial expulsion, TRAF3 undergoes 'Lys-33'-linked polyubiquitination and subsequently binds to RALGDS, mobilizing the exocyst complex to rapidly expel intracellular bacteria back for clearance. Also acts as a constitutive negative regulator of the alternative NF-kappa-B pathway, which controls B-cell survival and lymphoid organ development. Required for normal antibody isotype switching from IgM to IgG. Plays a role T-cell dependent immune responses. Down-regulates proteolytic processing of NFKB2, and thereby inhibits non-canonical activation of NF-kappa-B. Promotes ubiquitination and proteasomal degradation of MAP3K14. The sequence is that of TNF receptor-associated factor 3 from Homo sapiens (Human).